Here is a 502-residue protein sequence, read N- to C-terminus: UDP-N-acetylglucosamine diphosphorylase 2 (502 aa).

Residues 130 to 133 (LSGG) carry the Substrate binding motif. Residue Asn250 coordinates substrate. The Substrate binding motif lies at 332–333 (EY). Lys429 provides a ligand contact to substrate.

The protein belongs to the UDPGP type 1 family. As to quaternary structure, monomer. The cofactor is Mg(2+). Mn(2+) serves as cofactor. In terms of tissue distribution, expressed in root tips, stipules, lateral root primordia, immature anthers and at the branching points of the flowering shoots.

It localises to the cytoplasm. It catalyses the reaction N-acetyl-alpha-D-glucosamine 1-phosphate + UTP + H(+) = UDP-N-acetyl-alpha-D-glucosamine + diphosphate. It carries out the reaction N-acetyl-alpha-D-galactosamine 1-phosphate + UTP + H(+) = UDP-N-acetyl-alpha-D-galactosamine + diphosphate. The enzyme catalyses alpha-D-glucose 1-phosphate + UTP + H(+) = UDP-alpha-D-glucose + diphosphate. Its pathway is nucleotide-sugar biosynthesis; UDP-N-acetyl-alpha-D-glucosamine biosynthesis; UDP-N-acetyl-alpha-D-glucosamine from N-acetyl-alpha-D-glucosamine 1-phosphate: step 1/1. In terms of biological role, uridylyltransferase involved in the biosynthesis of UDP-glucosamine, an essential precursor for glycoprotein and glycolipid synthesis. Can use UDP-glucosamine, the 4-epimer UDP-galactosamine and UDP-glucose as substrates. Acts redundantly with GLCNAC1PUT1. Required for gametogenesis and embryo development. The polypeptide is UDP-N-acetylglucosamine diphosphorylase 2 (GLCNAC1PUT2) (Arabidopsis thaliana (Mouse-ear cress)).